The chain runs to 490 residues: GTPase Der (490 aa).

EngA-type G domains are found at residues 3 to 166 (PVVA…MDDV) and 203 to 376 (IKLA…DSST). Residues 9 to 16 (GRPNVGKS), 56 to 60 (DTGGI), 118 to 121 (NKTD), 209 to 216 (GRPNVGKS), 256 to 260 (DTAGV), and 321 to 324 (NKWD) contribute to the GTP site. A KH-like domain is found at 377–461 (RRVSTAMLTR…PIRIQFKEGE (85 aa)).

This sequence belongs to the TRAFAC class TrmE-Era-EngA-EngB-Septin-like GTPase superfamily. EngA (Der) GTPase family. Associates with the 50S ribosomal subunit.

Functionally, GTPase that plays an essential role in the late steps of ribosome biogenesis. The polypeptide is GTPase Der (Salmonella typhi).